The chain runs to 711 residues: Polyribonucleotide nucleotidyltransferase (711 aa).

Mg(2+) is bound by residues Asp-491 and Asp-497. The KH domain maps to 559–618 (PRLITIKINPEKIRDVIGKGGAVIRALTEETGTQIDISDEGVVTIASVDAAAGQEAKRRI). The S1 motif domain occupies 628–696 (GKIYEGTVLK…DRGRLKLSMK (69 aa)).

The protein belongs to the polyribonucleotide nucleotidyltransferase family. It depends on Mg(2+) as a cofactor.

The protein resides in the cytoplasm. The enzyme catalyses RNA(n+1) + phosphate = RNA(n) + a ribonucleoside 5'-diphosphate. Its function is as follows. Involved in mRNA degradation. Catalyzes the phosphorolysis of single-stranded polyribonucleotides processively in the 3'- to 5'-direction. This chain is Polyribonucleotide nucleotidyltransferase, found in Janthinobacterium sp. (strain Marseille) (Minibacterium massiliensis).